The following is a 156-amino-acid chain: Large ribosomal subunit protein eL24 (156 aa).

The tract at residues 87–156 (LELIKERRSQ…AFQKVHATSR (70 aa)) is disordered. The segment covering 89–129 (LIKERRSQKPSDRKAARDVKLAKDKEAKKADKAARKAEKAK) has biased composition (basic and acidic residues). The span at 130–147 (SAAAGAQSKVSKQQSKGA) shows a compositional bias: low complexity.

Belongs to the eukaryotic ribosomal protein eL24 family.

This is Large ribosomal subunit protein eL24 (RPL24) from Debaryomyces hansenii (strain ATCC 36239 / CBS 767 / BCRC 21394 / JCM 1990 / NBRC 0083 / IGC 2968) (Yeast).